The chain runs to 243 residues: Segregation and condensation protein A (243 aa).

Belongs to the ScpA family. Component of a cohesin-like complex composed of ScpA, ScpB and the Smc homodimer, in which ScpA and ScpB bind to the head domain of Smc. The presence of the three proteins is required for the association of the complex with DNA.

It localises to the cytoplasm. Its function is as follows. Participates in chromosomal partition during cell division. May act via the formation of a condensin-like complex containing Smc and ScpB that pull DNA away from mid-cell into both cell halves. The polypeptide is Segregation and condensation protein A (Staphylococcus epidermidis (strain ATCC 35984 / DSM 28319 / BCRC 17069 / CCUG 31568 / BM 3577 / RP62A)).